The following is a 295-amino-acid chain: Non-selective voltage-gated ion channel VDAC2 (295 aa).

ATP contacts are provided by Lys24 and Lys32. Position 32 is an N6-acetyllysine; alternate (Lys32). Lys32 bears the N6-succinyllysine; alternate mark. Residue Lys32 forms a Glycyl lysine isopeptide (Lys-Gly) (interchain with G-Cter in ubiquitin); alternate linkage. 2 beta stranded membrane passes run 38–47 (LVKLDVKTKS) and 51–59 (VEFSTSGSS). Lys65 participates in a covalent cross-link: Glycyl lysine isopeptide (Lys-Gly) (interchain with G-Cter in ubiquitin). The chain crosses the membrane as a beta stranded span at residues 66–76 (VSGTLETKYKW). Tyr79 is modified (phosphotyrosine). 3 beta stranded membrane passes run 81 to 88 (LTFTEKWN), 92 to 101 (TLGTEIAIED), and 107 to 116 (LKLTFDTTFS). Thr119 carries the post-translational modification Phosphothreonine. Lys121 carries the N6-acetyllysine; alternate modification. Residue Lys121 forms a Glycyl lysine isopeptide (Lys-Gly) (interchain with G-Cter in ubiquitin); alternate linkage. Lys122 is covalently cross-linked (Glycyl lysine isopeptide (Lys-Gly) (interchain with G-Cter in ubiquitin)). 4 beta stranded membrane-spanning segments follow: residues 123-132 (SGKIKSAYKR), 135-142 (INLGCDVD), 149-157 (AIHGSAVFG), and 162-170 (LAGYQMTFD). Lys173 is covalently cross-linked (Glycyl lysine isopeptide (Lys-Gly) (interchain with G-Cter in ubiquitin)). Beta stranded transmembrane passes span 175–187 (KLTR…GYRT), 190–197 (FQLHTNVN), 201–210 (EFGGSIYQKV), 214–223 (FDTSVNLAWT), 230–239 (RFGIAAKYQL), and 243–250 (ASISAKVN). Tyr237 is subject to Phosphotyrosine. Ser252 carries the post-translational modification Phosphoserine. NAD(+) contacts are provided by residues 254–256 (LIG) and 272–276 (SALVD). Beta stranded transmembrane passes span 254 to 263 (LIGVGYTQTL) and 266 to 275 (GVKLTLSALV). N6-acetyllysine; alternate is present on Lys278. A Glycyl lysine isopeptide (Lys-Gly) (interchain with G-Cter in ubiquitin); alternate cross-link involves residue Lys278. A beta stranded transmembrane segment spans residues 285–294 (HKLGLALELE).

Belongs to the eukaryotic mitochondrial porin family. As to quaternary structure, monomer, homodimer and higher order oligomers; formation of higher order structures is necessary for scramblase activity. Interacts with ARMC12 in a TBC1D21-dependent manner. Interacts with KLC3. Interacts with SPATA33. Interacts with PPP3CC in a SPATA33-dependent manner. Post-translationally, ubiquitinated by PRKN during mitophagy, leading to its degradation and enhancement of mitophagy. Deubiquitinated by USP30. Highly expressed in heart, kidney, brain and ascitic tumor with very low levels in liver. Expressed in the head region of epididymal sperm.

It localises to the mitochondrion outer membrane. The protein localises to the membrane. The enzyme catalyses chloride(in) = chloride(out). The catalysed reaction is K(+)(in) = K(+)(out). It catalyses the reaction a 1,2-diacyl-sn-glycero-3-phospho-L-serine(in) = a 1,2-diacyl-sn-glycero-3-phospho-L-serine(out). It carries out the reaction a 1,2-diacyl-sn-glycero-3-phosphocholine(in) = a 1,2-diacyl-sn-glycero-3-phosphocholine(out). The enzyme catalyses a 1,2-diacyl-sn-glycero-3-phospho-(1D-myo-inositol)(in) = a 1,2-diacyl-sn-glycero-3-phospho-(1D-myo-inositol)(out). Non-selective voltage-gated ion channel that mediates the transport of anions and cations through the mitochondrion outer membrane and plasma membrane. The channel adopts an open conformation at zero mV and a closed conformation at both positive and negative potentials. There are two populations of channels; the main that functions in a lower open-state conductance with lower ion selectivity, that switch, in a voltage-dependent manner, from the open to a low-conducting 'closed' state and the other that has a normal ion selectivity in the typical high conductance, 'open' state. Binds various lipids, including the sphingolipid ceramide, the phospholipid phosphatidylcholine, and the sterols cholesterol and oxysterol. Binding of ceramide promotes the mitochondrial outer membrane permeabilization (MOMP) apoptotic pathway. Its function is as follows. Catalyzes the scrambling of phospholipids across the outer mitochondrial membrane; the mechanism is unrelated to channel activity and is capable of translocating both anionic and zwitterionic phospholipids. This is Non-selective voltage-gated ion channel VDAC2 from Rattus norvegicus (Rat).